We begin with the raw amino-acid sequence, 317 residues long: MTDKLTSLRQYTTVVADTGDIAAMKLYQPQDATTNPSLILNAAQIPEYRKLIDDAVAWAKQQSNDRAQQIVDATDKLAVNIGLEILKLVPGRISTEVDARLSYDTEASIAKAKRLIKLYNDAGISNDRILIKLASTWQGIRAAEQLEKEGINCNLTLLFSFAQARACAEAGVFLISPFVGRILDWYKANTDKKEYAPAEDPGVVSVSEIYQYYKEHGYETVVMGASFRNIGEILELAGCDRLTIAPALLKELAESEGAIERKLSYTGEVKARPARITESEFLWQHNQDPMAVDKLAEGIRKFAVDQEKLEKMIGDLL.

K132 acts as the Schiff-base intermediate with substrate in catalysis.

Belongs to the transaldolase family. Type 1 subfamily. In terms of assembly, homodimer.

It is found in the cytoplasm. The enzyme catalyses D-sedoheptulose 7-phosphate + D-glyceraldehyde 3-phosphate = D-erythrose 4-phosphate + beta-D-fructose 6-phosphate. It participates in carbohydrate degradation; pentose phosphate pathway; D-glyceraldehyde 3-phosphate and beta-D-fructose 6-phosphate from D-ribose 5-phosphate and D-xylulose 5-phosphate (non-oxidative stage): step 2/3. Its function is as follows. Transaldolase is important for the balance of metabolites in the pentose-phosphate pathway. This chain is Transaldolase, found in Shigella dysenteriae serotype 1 (strain Sd197).